Reading from the N-terminus, the 1171-residue chain is ATP-dependent helicase/deoxyribonuclease subunit B (1171 aa).

One can recognise a UvrD-like helicase ATP-binding domain in the interval 1-343 (MSLRFVIGRA…LVAEENYRYR (343 aa)). 8 to 15 (GRAGSGKS) provides a ligand contact to ATP. Residues 281–587 (MEQPRFHSPA…QFANIPPSLD (307 aa)) form the UvrD-like helicase C-terminal domain. Residues Cys-805, Cys-1129, Cys-1132, and Cys-1138 each coordinate [4Fe-4S] cluster.

The protein belongs to the helicase family. AddB/RexB type 1 subfamily. As to quaternary structure, heterodimer of AddA and AddB. Requires Mg(2+) as cofactor. It depends on [4Fe-4S] cluster as a cofactor.

In terms of biological role, the heterodimer acts as both an ATP-dependent DNA helicase and an ATP-dependent, dual-direction single-stranded exonuclease. Recognizes the chi site generating a DNA molecule suitable for the initiation of homologous recombination. The AddB subunit has 5' -&gt; 3' nuclease activity but not helicase activity. The sequence is that of ATP-dependent helicase/deoxyribonuclease subunit B from Bacillus anthracis.